The chain runs to 211 residues: tRNA (guanine-N(7)-)-methyltransferase (211 aa).

S-adenosyl-L-methionine-binding residues include glutamate 43, aspartate 68, asparagine 95, and asparagine 117. Substrate contacts are provided by residues lysine 121, aspartate 153, and threonine 190–glutamate 193.

The protein belongs to the class I-like SAM-binding methyltransferase superfamily. TrmB family.

The catalysed reaction is guanosine(46) in tRNA + S-adenosyl-L-methionine = N(7)-methylguanosine(46) in tRNA + S-adenosyl-L-homocysteine. Its pathway is tRNA modification; N(7)-methylguanine-tRNA biosynthesis. In terms of biological role, catalyzes the formation of N(7)-methylguanine at position 46 (m7G46) in tRNA. The protein is tRNA (guanine-N(7)-)-methyltransferase of Clostridium kluyveri (strain ATCC 8527 / DSM 555 / NBRC 12016 / NCIMB 10680 / K1).